A 529-amino-acid polypeptide reads, in one-letter code: GMP synthase [glutamine-hydrolyzing] (529 aa).

The Glutamine amidotransferase type-1 domain maps to 13-204; sequence PVLVVDFGAQ…LLETAGLEPT (192 aa). C90 functions as the Nucleophile in the catalytic mechanism. Catalysis depends on residues H178 and E180. The 199-residue stretch at 205–403 folds into the GMPS ATP-PPase domain; it reads WTAGNIAEQL…LGLPEEIVAR (199 aa). 233 to 239 provides a ligand contact to ATP; sequence SGGVDSA.

In terms of assembly, homodimer.

The enzyme catalyses XMP + L-glutamine + ATP + H2O = GMP + L-glutamate + AMP + diphosphate + 2 H(+). It participates in purine metabolism; GMP biosynthesis; GMP from XMP (L-Gln route): step 1/1. Catalyzes the synthesis of GMP from XMP. The protein is GMP synthase [glutamine-hydrolyzing] of Corynebacterium jeikeium (strain K411).